The primary structure comprises 61 residues: MGLSGISPLSLLLILAIIVALFGTSKLKTIGSDLGEAIKNFRKAMNSEETNDTQKDDHKPL.

The chain crosses the membrane as a helical span at residues 2 to 22 (GLSGISPLSLLLILAIIVALF).

This sequence belongs to the TatA/E family. In terms of assembly, the Tat system comprises two distinct complexes: a TatABC complex, containing multiple copies of TatA, TatB and TatC subunits, and a separate TatA complex, containing only TatA subunits. Substrates initially bind to the TatABC complex, which probably triggers association of the separate TatA complex to form the active translocon.

It localises to the cell inner membrane. Its function is as follows. Part of the twin-arginine translocation (Tat) system that transports large folded proteins containing a characteristic twin-arginine motif in their signal peptide across membranes. TatA could form the protein-conducting channel of the Tat system. The protein is Sec-independent protein translocase protein TatA of Legionella pneumophila (strain Corby).